Here is a 718-residue protein sequence, read N- to C-terminus: MLFSLRRLKKLANLEAFSDQKVIDSLINLGFEVDQITKLNEISGIKFGQILEIRKNPEADNLWICKVQFADKIREIQTTAKNVIENKQVLAFIPGSKSGNTTFLAKKLRGHISEGMLISAAELGFNKHLLNSELDQGVLVFDPIFDLESNPLKVLELDDLILDIKLLWNRPDGNSYLVLANELAAFFKTDFSLINKEITGKFYSELKIINKTDSKIFALEIQKLPKLALVDIFLLLKSEVKIDNLAQNFANFILIYTGQPCYCLQLEKNQQKVELIEQKVKIKYEPDAISSYHFLDQEKKPLLIPEFSDQIIMENNSFFLIMPKFNLLKVKQIKQFLKKNSLKLTQLGKNYNYGTTFIALSFLNFFLEDQKIDFSWPINFDKSLISKKTFLDLNYNELKEILGLELSQEDISKTNLILEKIGYNFDNTSFSPPFYRVDIEFFADYAADFLRFYGLEKLKDCKLEQVKAKIPNPDFEPVKLKTLGYYETNSFLLISKKEDFNPLELKSQDLLTFPSQEHTKIRYSLAWQLAKITKYNQKRKITEINLYEKGSIAGWNHSLALASTIYTSEDLKKHLKILYNYDFDFLPADSEFLNPEKSQFIYLDNVLVGWLGQVVEKYNYENVTFLEILLSKVEKIPKKEGGKIKFRPYDNSQLKYRDITLSLPMKDIPDPYLKVIQKIPEIFSVKLINYVIINNQQKITYRITGPDQVCAEIDKFYK.

A tRNA-binding domain is found at Leu39–Lys153. In terms of domain architecture, B5 spans Ser386 to Asp460. Mg(2+)-binding residues include Asp438, Asp444, and Asp448.

This sequence belongs to the phenylalanyl-tRNA synthetase beta subunit family. Type 1 subfamily. As to quaternary structure, tetramer of two alpha and two beta subunits. It depends on Mg(2+) as a cofactor.

It localises to the cytoplasm. The catalysed reaction is tRNA(Phe) + L-phenylalanine + ATP = L-phenylalanyl-tRNA(Phe) + AMP + diphosphate + H(+). This Mesomycoplasma hyopneumoniae (strain 7448) (Mycoplasma hyopneumoniae) protein is Phenylalanine--tRNA ligase beta subunit.